The following is a 562-amino-acid chain: Glutamyl-tRNA(Gln) amidotransferase subunit B, chloroplastic/mitochondrial (562 aa).

The tract at residues 48 to 76 (SVASNSKREPRPVKTRVMTQERGSGETQT) is disordered. Over residues 64–76 (VMTQERGSGETQT) the composition is skewed to polar residues.

Belongs to the GatB/GatE family. GatB subfamily. Subunit of the heterotrimeric GatCAB amidotransferase (AdT) complex, composed of A, B and C subunits.

The protein resides in the mitochondrion. It localises to the plastid. It is found in the chloroplast. It carries out the reaction L-glutamyl-tRNA(Gln) + L-glutamine + ATP + H2O = L-glutaminyl-tRNA(Gln) + L-glutamate + ADP + phosphate + H(+). Functionally, allows the formation of correctly charged Gln-tRNA(Gln) through the transamidation of misacylated Glu-tRNA(Gln) in chloroplasts and mitochondria. The reaction takes place in the presence of glutamine and ATP through an activated gamma-phospho-Glu-tRNA(Gln). This chain is Glutamyl-tRNA(Gln) amidotransferase subunit B, chloroplastic/mitochondrial, found in Physcomitrium patens (Spreading-leaved earth moss).